The sequence spans 126 residues: MEQQLTFYSYPSCTSCRKTKHWLKAHQIEFNERHLFRETPTREELKYILSLTTEGIDEILATRSQTFKNLNLNIEEMTVNEVLELLIEKPKLLRRPILVDNKKLVIGYNPGELLKLSKKKTVHQSA.

Cys13 and Cys16 are disulfide-bonded.

It belongs to the ArsC family.

The protein localises to the cytoplasm. Its activity is regulated as follows. Activity is controlled at multiple levels. Regulation includes a positive autoregulatory loop on mgsR transcription and a post-translational redox-sensitive activation step by an intramolecular disulfide bond formation in response to ethanol stress. In addition, protein stability is strictly controlled by rapid proteolytic degradation by the ClpXP and ClpCP proteases. The McsB protein-arginine kinase might serve as a proteolytic adapter for the ClpX ATPase in the degradation mechanism of MgsR. Regulates transcription of a subregulon within the general stress response. Exerts positive and negative effects in response to ethanol stress. The chain is Regulatory protein MgsR from Bacillus subtilis (strain 168).